The following is a 342-amino-acid chain: Ribosomal RNA small subunit methyltransferase C (342 aa).

It belongs to the methyltransferase superfamily. RsmC family. Monomer.

It localises to the cytoplasm. The catalysed reaction is guanosine(1207) in 16S rRNA + S-adenosyl-L-methionine = N(2)-methylguanosine(1207) in 16S rRNA + S-adenosyl-L-homocysteine + H(+). In terms of biological role, specifically methylates the guanine in position 1207 of 16S rRNA in the 30S particle. The chain is Ribosomal RNA small subunit methyltransferase C from Salmonella agona (strain SL483).